Consider the following 205-residue polypeptide: Dihydrofolate reductase (205 aa).

The 201-residue stretch at 1 to 201 folds into the DHFR domain; that stretch reads MLALVVALAS…TSFKMFLYTK (201 aa). NADP(+)-binding positions include A7 and 13-19; that span reads GIGNANA. 29–34 contributes to the substrate binding site; sequence DMAWFR. An NADP(+)-binding site is contributed by 62-64; it reads RRT. Residue R78 participates in substrate binding. Residues 84 to 86 and 118 to 125 contribute to the NADP(+) site; these read SRG and GGRDVYSL.

Belongs to the dihydrofolate reductase family.

The catalysed reaction is (6S)-5,6,7,8-tetrahydrofolate + NADP(+) = 7,8-dihydrofolate + NADPH + H(+). It functions in the pathway cofactor biosynthesis; tetrahydrofolate biosynthesis; 5,6,7,8-tetrahydrofolate from 7,8-dihydrofolate: step 1/1. Functionally, key enzyme in folate metabolism. Catalyzes an essential reaction for de novo glycine and purine synthesis, and for DNA precursor synthesis. This Encephalitozoon cuniculi (strain GB-M1) (Microsporidian parasite) protein is Dihydrofolate reductase (DHFR-1).